The primary structure comprises 184 residues: ATP synthase subunit b, chloroplastic (184 aa).

A helical membrane pass occupies residues 27–49 (LATNPINLSVVLGVLIFFGKGVL).

This sequence belongs to the ATPase B chain family. F-type ATPases have 2 components, F(1) - the catalytic core - and F(0) - the membrane proton channel. F(1) has five subunits: alpha(3), beta(3), gamma(1), delta(1), epsilon(1). F(0) has four main subunits: a(1), b(1), b'(1) and c(10-14). The alpha and beta chains form an alternating ring which encloses part of the gamma chain. F(1) is attached to F(0) by a central stalk formed by the gamma and epsilon chains, while a peripheral stalk is formed by the delta, b and b' chains.

It is found in the plastid. The protein resides in the chloroplast thylakoid membrane. In terms of biological role, f(1)F(0) ATP synthase produces ATP from ADP in the presence of a proton or sodium gradient. F-type ATPases consist of two structural domains, F(1) containing the extramembraneous catalytic core and F(0) containing the membrane proton channel, linked together by a central stalk and a peripheral stalk. During catalysis, ATP synthesis in the catalytic domain of F(1) is coupled via a rotary mechanism of the central stalk subunits to proton translocation. Functionally, component of the F(0) channel, it forms part of the peripheral stalk, linking F(1) to F(0). This Nicotiana tomentosiformis (Tobacco) protein is ATP synthase subunit b, chloroplastic.